A 235-amino-acid polypeptide reads, in one-letter code: Uridylate kinase (235 aa).

Residue lysine 8–glycine 11 coordinates ATP. UMP is bound at residue glycine 49. ATP contacts are provided by glycine 50 and arginine 54. Residue threonine 131–threonine 138 participates in UMP binding. Asparagine 159, tyrosine 165, and aspartate 168 together coordinate ATP.

This sequence belongs to the UMP kinase family. In terms of assembly, homohexamer.

The protein resides in the cytoplasm. The catalysed reaction is UMP + ATP = UDP + ADP. Its pathway is pyrimidine metabolism; CTP biosynthesis via de novo pathway; UDP from UMP (UMPK route): step 1/1. Inhibited by UTP. Catalyzes the reversible phosphorylation of UMP to UDP. This is Uridylate kinase from Mycoplasma pneumoniae (strain ATCC 29342 / M129 / Subtype 1) (Mycoplasmoides pneumoniae).